The primary structure comprises 736 residues: Glycogen [starch] synthase, muscle (736 aa).

Ser-8 bears the Phosphoserine; by AMPK and PKA mark. Ser-11 is subject to Phosphoserine. Lys-39 is a UDP binding site. His-205 and Arg-211 together coordinate UDP-alpha-D-glucose. Alpha-D-glucose 6-phosphate is bound by residues His-291, Glu-292, Gln-294, His-297, and Lys-301. Arg-331 is a binding site for UDP. Arg-331 is a binding site for UDP-alpha-D-glucose. Residue Ser-412 is modified to Phosphoserine. Alpha-D-glucose 6-phosphate is bound at residue His-501. UDP-alpha-D-glucose contacts are provided by Glu-510, Trp-512, and Gly-513. Thr-515 lines the UDP pocket. Alpha-D-glucose 6-phosphate-binding residues include Arg-582 and Arg-586. The disordered stretch occupies residues 631 to 736 (TQGYRYPRPA…PASSLGEERN (106 aa)). Ser-641 bears the Phosphoserine; by DYRK2, GSK3-alpha, GSK3-beta and PASK mark. Phosphoserine; by GSK3-alpha and GSK3-beta occurs at positions 645 and 649. Ser-652 carries the post-translational modification Phosphoserine. Position 653 is a phosphoserine; by GSK3-alpha and GSK3-beta (Ser-653). Position 657 is a phosphoserine; by CK2 (Ser-657). Residues 658-681 (EDEEEPRDLPPDEDDERYDEDEEA) are compositionally biased toward acidic residues. A compositionally biased stretch (basic and acidic residues) spans 682-695 (AKDRRNIRAPEWPR). At Ser-698 the chain carries Phosphoserine. The residue at position 700 (Thr-700) is a Phosphothreonine. Ser-709 carries the phosphoserine modification. Residues 714–727 (PSSSVSTPSEPLSP) show a composition bias toward low complexity. Thr-720 is modified (phosphothreonine). A phosphoserine mark is found at Ser-726 and Ser-730.

Belongs to the glycosyltransferase 3 family. Part of the GYS1-GYG1 complex, a heterooctamer composed of a tetramer of GYS1 and 2 dimers of GYG1, where each GYS1 protomer binds to one GYG1 subunit (via GYG1 C-terminus); the GYS1 tetramer may dissociate from GYG1 dimers to continue glycogen polymerization on its own. In terms of processing, phosphorylation at Ser-8 by AMPK inactivates the enzyme activity. Primed phosphorylation at Ser-657 (site 5) by CSNK2A1 and CSNK2A2 is required for inhibitory phosphorylation at Ser-641 (site 3a), Ser-645 (site 3b), Ser-649 (site 3c) and Ser-653 (site 4) by GSK3A an GSK3B. Phosphorylated at Ser-641 by PASK, leading to inactivation; phosphorylation by PASK is inhibited by glycogen. Phosphorylated at Ser-641 by DYRK2, leading to inactivation. Dephosphorylation at Ser-641 and Ser-645 by PP1 activates the enzyme.

It catalyses the reaction [(1-&gt;4)-alpha-D-glucosyl](n) + UDP-alpha-D-glucose = [(1-&gt;4)-alpha-D-glucosyl](n+1) + UDP + H(+). The protein operates within glycan biosynthesis; glycogen biosynthesis. Its activity is regulated as follows. Allosteric activation by glucose-6-phosphate. Phosphorylation reduces the activity towards UDP-glucose. When in the non-phosphorylated state, glycogen synthase does not require glucose-6-phosphate as an allosteric activator; when phosphorylated it does. In terms of biological role, glycogen synthase participates in the glycogen biosynthetic process along with glycogenin and glycogen branching enzyme. Extends the primer composed of a few glucose units formed by glycogenin by adding new glucose units to it. In this context, glycogen synthase transfers the glycosyl residue from UDP-Glc to the non-reducing end of alpha-1,4-glucan. The sequence is that of Glycogen [starch] synthase, muscle (GYS1) from Bos taurus (Bovine).